A 246-amino-acid polypeptide reads, in one-letter code: MIRLNLSVKNLKEITDLLSTIVSEAKFRVDENGMSVTAVDPAHVAMIRLEVPKEAFVEFHTDGQEEIALDIDRLKSVIRLASSSENVGITKDGEKLKFELGTINKSISLLDPSTIVTPKIPNITSEYYAVLKKSDFERGLRAAEDISDSIRFTLSQDGFKAYSHSESEESEMILPKDLITDMSCNTTIKSSYPLEYLLKFIKAISSTDSLKLSFRDDYPLSVEFYLDQNPGAKIKGLFLLAPRMEQ.

The protein belongs to the PCNA family. Homotrimer. The subunits circularize to form a toroid; DNA passes through its center. Replication factor C (RFC) is required to load the toroid on the DNA.

Functionally, sliding clamp subunit that acts as a moving platform for DNA processing. Responsible for tethering the catalytic subunit of DNA polymerase and other proteins to DNA during high-speed replication. In Thermoplasma acidophilum (strain ATCC 25905 / DSM 1728 / JCM 9062 / NBRC 15155 / AMRC-C165), this protein is DNA polymerase sliding clamp.